The chain runs to 150 residues: Large ribosomal subunit protein bL9 (150 aa).

The protein belongs to the bacterial ribosomal protein bL9 family.

Functionally, binds to the 23S rRNA. The protein is Large ribosomal subunit protein bL9 of Cupriavidus metallidurans (strain ATCC 43123 / DSM 2839 / NBRC 102507 / CH34) (Ralstonia metallidurans).